The primary structure comprises 137 residues: Large ribosomal subunit protein uL16 (137 aa).

It belongs to the universal ribosomal protein uL16 family. Part of the 50S ribosomal subunit.

Binds 23S rRNA and is also seen to make contacts with the A and possibly P site tRNAs. The sequence is that of Large ribosomal subunit protein uL16 from Streptococcus agalactiae serotype Ia (strain ATCC 27591 / A909 / CDC SS700).